The chain runs to 693 residues: Putative tyrosinase-like protein tyr-3 (693 aa).

The N-terminal stretch at 1–18 is a signal peptide; that stretch reads MIRYIILLVYFLIFEVNS. Residues histidine 142, histidine 152, histidine 161, histidine 281, histidine 285, and histidine 308 each contribute to the Cu cation site. ShKT domains are found at residues 472–506, 516–550, 591–625, and 634–667; these read CFNE…CRQC, CSDR…CQKC, CYNE…CGVC, and CADY…CNTC. Disulfide bonds link cysteine 472–cysteine 506, cysteine 479–cysteine 499, cysteine 488–cysteine 503, cysteine 516–cysteine 550, cysteine 523–cysteine 543, cysteine 532–cysteine 547, cysteine 591–cysteine 625, cysteine 598–cysteine 618, cysteine 607–cysteine 622, cysteine 634–cysteine 667, cysteine 641–cysteine 660, and cysteine 650–cysteine 664.

Belongs to the tyrosinase family. Requires Cu(2+) as cofactor.

This chain is Putative tyrosinase-like protein tyr-3 (tyr-3), found in Caenorhabditis elegans.